Reading from the N-terminus, the 267-residue chain is Phosphatidylcholine synthase (267 aa).

Over 1 to 42 the chain is Cytoplasmic; it reads MILWRIVRPGAAMAYVQTGLVLIAEAMDTQQDSLKPRPAMRA. A helical membrane pass occupies residues 43-63; it reads AAFSVHVFTAFGAAIALLAML. Residues 64–69 lie on the Periplasmic side of the membrane; the sequence is EAVREH. Residues 70-90 traverse the membrane as a helical segment; it reads WAAMFQWLGVALIIDAIDGPI. Topologically, residues 91–102 are cytoplasmic; sequence ARRLDVKNVQPN. Residues 103–123 form a helical membrane-spanning segment; the sequence is WSGDVLDLVVDFVTYVFVPAY. A topological domain (periplasmic) is located at residue Ala-124. A helical membrane pass occupies residues 125–145; it reads IVASGLLLPVAAPLLGVAIIV. Over 146–162 the chain is Cytoplasmic; that stretch reads TSALYFADLRMKADDNH. Residues 163-183 form a helical membrane-spanning segment; that stretch reads FRGFPALWNAAAFYLFLLHWP. Pro-184 is a topological domain (periplasmic). A helical transmembrane segment spans residues 185 to 205; sequence LWSTLLVAALVVLTFVPFHVL. Residues 206 to 215 lie on the Cytoplasmic side of the membrane; sequence HPVRVVRLRW. A helical transmembrane segment spans residues 216–236; sequence LTMSLIGIWAVLSLYTLDMDF. Over 237–239 the chain is Periplasmic; the sequence is RVG. A helical membrane pass occupies residues 240 to 260; it reads PGVTLALCAIALWISFSDALI. The Cytoplasmic portion of the chain corresponds to 261-267; it reads RFARSFA.

The protein belongs to the CDP-alcohol phosphatidyltransferase class-I family. The cofactor is Mn(2+).

It localises to the cell inner membrane. It carries out the reaction a CDP-1,2-diacyl-sn-glycerol + choline = a 1,2-diacyl-sn-glycero-3-phosphocholine + CMP + H(+). Condenses choline with CDP-diglyceride to produce phosphatidylcholine and CMP. This Bradyrhizobium diazoefficiens (strain JCM 10833 / BCRC 13528 / IAM 13628 / NBRC 14792 / USDA 110) protein is Phosphatidylcholine synthase.